A 147-amino-acid polypeptide reads, in one-letter code: Proteinase inhibitor type-2 (147 aa).

Residues Met1–Ala25 form the signal peptide. Repeat copies occupy residues Ala25–Asn81 and Pro82–Lys141. Intrachain disulfides connect Cys28–Cys116, Cys32–Cys112, Cys40–Cys122, Cys52–Cys89, Cys55–Cys73, Cys56–Cys85, Cys62–Cys98, and Cys115–Cys133.

It belongs to the protease inhibitor I20 (potato type II proteinase inhibitor) family.

This Solanum tuberosum (Potato) protein is Proteinase inhibitor type-2.